The chain runs to 505 residues: tRNA-2-methylthio-N(6)-dimethylallyladenosine synthase (505 aa).

The MTTase N-terminal domain maps to R10–H126. [4Fe-4S] cluster-binding residues include C19, C55, C89, C163, C167, and C170. The Radical SAM core domain maps to R149 to E385. The region spanning Q388–V459 is the TRAM domain.

It belongs to the methylthiotransferase family. MiaB subfamily. Monomer. [4Fe-4S] cluster serves as cofactor.

It localises to the cytoplasm. The enzyme catalyses N(6)-dimethylallyladenosine(37) in tRNA + (sulfur carrier)-SH + AH2 + 2 S-adenosyl-L-methionine = 2-methylsulfanyl-N(6)-dimethylallyladenosine(37) in tRNA + (sulfur carrier)-H + 5'-deoxyadenosine + L-methionine + A + S-adenosyl-L-homocysteine + 2 H(+). Catalyzes the methylthiolation of N6-(dimethylallyl)adenosine (i(6)A), leading to the formation of 2-methylthio-N6-(dimethylallyl)adenosine (ms(2)i(6)A) at position 37 in tRNAs that read codons beginning with uridine. In Rhodococcus jostii (strain RHA1), this protein is tRNA-2-methylthio-N(6)-dimethylallyladenosine synthase.